Reading from the N-terminus, the 259-residue chain is Ribosomal RNA small subunit methyltransferase A (259 aa).

S-adenosyl-L-methionine contacts are provided by Asn-13, Leu-15, Gly-39, Glu-60, Asp-84, and Asn-101.

This sequence belongs to the class I-like SAM-binding methyltransferase superfamily. rRNA adenine N(6)-methyltransferase family. RsmA subfamily.

The protein resides in the cytoplasm. The catalysed reaction is adenosine(1518)/adenosine(1519) in 16S rRNA + 4 S-adenosyl-L-methionine = N(6)-dimethyladenosine(1518)/N(6)-dimethyladenosine(1519) in 16S rRNA + 4 S-adenosyl-L-homocysteine + 4 H(+). Functionally, specifically dimethylates two adjacent adenosines (A1518 and A1519) in the loop of a conserved hairpin near the 3'-end of 16S rRNA in the 30S particle. May play a critical role in biogenesis of 30S subunits. This is Ribosomal RNA small subunit methyltransferase A from Mesomycoplasma hyopneumoniae (strain 232) (Mycoplasma hyopneumoniae).